We begin with the raw amino-acid sequence, 150 residues long: Arginine repressor (150 aa).

The protein belongs to the ArgR family.

It localises to the cytoplasm. It functions in the pathway amino-acid biosynthesis; L-arginine biosynthesis [regulation]. Functionally, regulates arginine biosynthesis genes. In Clostridium acetobutylicum (strain ATCC 824 / DSM 792 / JCM 1419 / IAM 19013 / LMG 5710 / NBRC 13948 / NRRL B-527 / VKM B-1787 / 2291 / W), this protein is Arginine repressor.